The primary structure comprises 354 residues: Selenide, water dikinase (354 aa).

Residue Cys-23 is part of the active site. Residues Lys-26 and 54–56 each bind ATP; that span reads TSD. A Mg(2+)-binding site is contributed by Asp-57. Residues Asp-74, Asp-97, and 145–147 each bind ATP; that span reads GHS. Asp-97 lines the Mg(2+) pocket. Asp-233 contributes to the Mg(2+) binding site.

This sequence belongs to the selenophosphate synthase 1 family. Class I subfamily. As to quaternary structure, homodimer. It depends on Mg(2+) as a cofactor.

The catalysed reaction is hydrogenselenide + ATP + H2O = selenophosphate + AMP + phosphate + 2 H(+). Synthesizes selenophosphate from selenide and ATP. This Burkholderia orbicola (strain MC0-3) protein is Selenide, water dikinase.